Here is a 507-residue protein sequence, read N- to C-terminus: Probable cytosol aminopeptidase (507 aa).

Mn(2+) contacts are provided by Lys-275 and Asp-280. Residue Lys-287 is part of the active site. Positions 298, 357, and 359 each coordinate Mn(2+). The active site involves Arg-361.

It belongs to the peptidase M17 family. Requires Mn(2+) as cofactor.

The protein localises to the cytoplasm. The enzyme catalyses Release of an N-terminal amino acid, Xaa-|-Yaa-, in which Xaa is preferably Leu, but may be other amino acids including Pro although not Arg or Lys, and Yaa may be Pro. Amino acid amides and methyl esters are also readily hydrolyzed, but rates on arylamides are exceedingly low.. It catalyses the reaction Release of an N-terminal amino acid, preferentially leucine, but not glutamic or aspartic acids.. Functionally, presumably involved in the processing and regular turnover of intracellular proteins. Catalyzes the removal of unsubstituted N-terminal amino acids from various peptides. The polypeptide is Probable cytosol aminopeptidase (Rhodopirellula baltica (strain DSM 10527 / NCIMB 13988 / SH1)).